Reading from the N-terminus, the 158-residue chain is 2-amino-4-hydroxy-6-hydroxymethyldihydropteridine pyrophosphokinase (158 aa).

It belongs to the HPPK family.

It carries out the reaction 6-hydroxymethyl-7,8-dihydropterin + ATP = (7,8-dihydropterin-6-yl)methyl diphosphate + AMP + H(+). It participates in cofactor biosynthesis; tetrahydrofolate biosynthesis; 2-amino-4-hydroxy-6-hydroxymethyl-7,8-dihydropteridine diphosphate from 7,8-dihydroneopterin triphosphate: step 4/4. In terms of biological role, catalyzes the transfer of pyrophosphate from adenosine triphosphate (ATP) to 6-hydroxymethyl-7,8-dihydropterin, an enzymatic step in folate biosynthesis pathway. This Methylorubrum extorquens (strain ATCC 14718 / DSM 1338 / JCM 2805 / NCIMB 9133 / AM1) (Methylobacterium extorquens) protein is 2-amino-4-hydroxy-6-hydroxymethyldihydropteridine pyrophosphokinase (folK).